A 342-amino-acid chain; its full sequence is Nicotinate-nucleotide--dimethylbenzimidazole phosphoribosyltransferase (342 aa).

Residue E311 is the Proton acceptor of the active site.

Belongs to the CobT family.

The catalysed reaction is 5,6-dimethylbenzimidazole + nicotinate beta-D-ribonucleotide = alpha-ribazole 5'-phosphate + nicotinate + H(+). The protein operates within nucleoside biosynthesis; alpha-ribazole biosynthesis; alpha-ribazole from 5,6-dimethylbenzimidazole: step 1/2. Its function is as follows. Catalyzes the synthesis of alpha-ribazole-5'-phosphate from nicotinate mononucleotide (NAMN) and 5,6-dimethylbenzimidazole (DMB). The chain is Nicotinate-nucleotide--dimethylbenzimidazole phosphoribosyltransferase from Shewanella loihica (strain ATCC BAA-1088 / PV-4).